The primary structure comprises 399 residues: Argonaute-binding protein 1 (399 aa).

In terms of assembly, component of the argonaute siRNA chaperone (ARC) complex composed of ago1, arb1 and arb2. Interacts with ago1.

It localises to the nucleus. Its subcellular location is the cytoplasm. In terms of biological role, component of the argonaute siRNA chaperone (ARC) complex which is required for histone H3K9 methylation, heterochromatin assembly and siRNA generation. The ARC complex contains mostly double-stranded siRNA. Inhibits the release of the siRNA passenger strand from ago1 together with arb2. Inhibits the slicer activity of ago1. Required for swi6 localization to the centromeric repeats. The chain is Argonaute-binding protein 1 (arb1) from Schizosaccharomyces pombe (strain 972 / ATCC 24843) (Fission yeast).